The sequence spans 430 residues: Divergent protein kinase domain 2A (430 aa).

A signal peptide spans 1–35; it reads MWRLVPPKLGRLSRSLKLAALGSLLVLMVLHSPSL.

The protein belongs to the DIPK family.

The protein localises to the cytoplasmic vesicle. The protein resides in the COPI-coated vesicle. Its subcellular location is the golgi apparatus. It is found in the secreted. May play a role in cardiomyocyte proliferation through paracrine signaling and activation of the PPI3K-AKT-CDK7 signaling cascade. The protein is Divergent protein kinase domain 2A of Homo sapiens (Human).